Consider the following 364-residue polypeptide: Fructose-bisphosphate aldolase A (364 aa).

Tyr5 is modified (phosphotyrosine). Thr9 is modified (phosphothreonine). Residues Ser36 and Ser39 each carry the phosphoserine modification. Lys42 bears the N6-acetyllysine; alternate mark. Lys42 participates in a covalent cross-link: Glycyl lysine isopeptide (Lys-Gly) (interchain with G-Cter in SUMO1); alternate. Residue Lys42 forms a Glycyl lysine isopeptide (Lys-Gly) (interchain with G-Cter in SUMO2); alternate linkage. Beta-D-fructose 1,6-bisphosphate is bound at residue Arg43. Ser46 carries the phosphoserine modification. Position 99 is an N6-(2-hydroxyisobutyryl)lysine (Lys99). Lys108 bears the N6-acetyllysine mark. Lys111 bears the N6-acetyllysine; alternate mark. At Lys111 the chain carries N6-malonyllysine; alternate. The residue at position 132 (Ser132) is a Phosphoserine. Lys147 bears the N6-(2-hydroxyisobutyryl)lysine mark. The active-site Proton acceptor is the Glu188. Catalysis depends on Lys230, which acts as the Schiff-base intermediate with dihydroxyacetone-P. Ser272 bears the Phosphoserine mark. Residues 272–274 (SGG), Ser301, and Arg304 contribute to the beta-D-fructose 1,6-bisphosphate site. Lys312 carries the N6-malonyllysine modification. The residue at position 330 (Lys330) is an N6-acetyllysine.

This sequence belongs to the class I fructose-bisphosphate aldolase family. Homotetramer. Interacts with SNX9 and WAS. Interacts with FBP2; the interaction blocks FBP2 inhibition by physiological concentrations of AMP and reduces inhibition by Ca(2+).

It localises to the cytoplasm. The protein localises to the myofibril. It is found in the sarcomere. The protein resides in the i band. Its subcellular location is the m line. The enzyme catalyses beta-D-fructose 1,6-bisphosphate = D-glyceraldehyde 3-phosphate + dihydroxyacetone phosphate. It participates in carbohydrate degradation; glycolysis; D-glyceraldehyde 3-phosphate and glycerone phosphate from D-glucose: step 4/4. Functionally, catalyzes the reversible conversion of beta-D-fructose 1,6-bisphosphate (FBP) into two triose phosphate and plays a key role in glycolysis and gluconeogenesis. In addition, may also function as scaffolding protein. This chain is Fructose-bisphosphate aldolase A (ALDOA), found in Pan troglodytes (Chimpanzee).